Reading from the N-terminus, the 338-residue chain is Nodulation outer protein L (338 aa).

Positions 1–14 are enriched in polar residues; it reads MDINSTSPLNASPQ. Disordered regions lie at residues 1 to 48, 85 to 158, 187 to 209, and 230 to 259; these read MDIN…LPQV, TRER…DLET, SPAP…PHAR, and PQAG…SSAG. A compositionally biased stretch (basic and acidic residues) spans 85 to 97; the sequence is TRERSPHPSEQRP. Over residues 126–138 the composition is skewed to polar residues; it reads VGPSRSGPSQAGL. The span at 242 to 258 shows a compositional bias: polar residues; sequence SGPSQARPSHAWPSSSA.

It localises to the secreted. Functionally, putative symbiotic effector that modulates nodulation in legumes. When delivered into the plant cell, modulates the activity of signal transduction pathways that culminate in activation of PR proteins. This Sinorhizobium fredii (strain NBRC 101917 / NGR234) protein is Nodulation outer protein L (nopL).